Here is a 508-residue protein sequence, read N- to C-terminus: MIKRALLSTYKKEKVVDFAQTLQELGIEIISTGGTAKKLQENSIEVTPVEEITNFPEILNGRVKTLNPFIQGGILARRENKQDMETLENLKIEPIDLIYVNLYPFVEVANKRDVDMNELIEFIDIGGPTMIRSAAKNYKDVIVVVDESDLEQISAKLKTPEELDENYRLYLASKAFNLTAFYDSCISNYLNAQLTNKDDFQEFLTVPFEKSYEMRYGENPHQSAIFYKNTLTSGAMTSFEQLNGKELSFNNLRDADSAWKAVNEFEDTACCCLKHSSPCGIALGDSVIEAYQKAYSCDPVSIFGGIVAFNRKIDVETALELKKIFLEIIMAPEYDEEALDILKEKKNLRILKMNSKPIDTYEYVSVDGGILVQEVDKRVINEFEVVTETKVSEEIKEELLFAWKAVKHVKSNAIVVSKNKATTGIGAGQPNRIWAATQALERSKDKGGDVLASDAFFPFSDVVEKAAEYGIKAIIQPGGSIRDDESIQACSKYGIAMVFTGMRHFKHI.

One can recognise an MGS-like domain in the interval 1–145 (MIKRALLSTY…KNYKDVIVVV (145 aa)).

This sequence belongs to the PurH family.

It carries out the reaction (6R)-10-formyltetrahydrofolate + 5-amino-1-(5-phospho-beta-D-ribosyl)imidazole-4-carboxamide = 5-formamido-1-(5-phospho-D-ribosyl)imidazole-4-carboxamide + (6S)-5,6,7,8-tetrahydrofolate. The enzyme catalyses IMP + H2O = 5-formamido-1-(5-phospho-D-ribosyl)imidazole-4-carboxamide. The protein operates within purine metabolism; IMP biosynthesis via de novo pathway; 5-formamido-1-(5-phospho-D-ribosyl)imidazole-4-carboxamide from 5-amino-1-(5-phospho-D-ribosyl)imidazole-4-carboxamide (10-formyl THF route): step 1/1. It functions in the pathway purine metabolism; IMP biosynthesis via de novo pathway; IMP from 5-formamido-1-(5-phospho-D-ribosyl)imidazole-4-carboxamide: step 1/1. This Petrotoga mobilis (strain DSM 10674 / SJ95) protein is Bifunctional purine biosynthesis protein PurH.